The sequence spans 435 residues: MFILTMGLNHHTAPIDIREKLVFKETEEEMALVTLQQEKSILENVIISTCNRTEIVAVVDQIHTGRYYLKRFMANWFQMDMEKIEPYLFFHEESEAVNHLYKVTAGLDSLVLGETQILGQVKHAFEIAKQTATTGTLLNKLFREVVTFAKKVHHHTKINENAVSVSYAAVEVAKKLYGSLDNKKIVLIGAGEMSELALQNLAGSGMTDITIINRTKTNAELLANQFQAKVGAYENMNEHLLLADIVLVSTSAAEPIIKQAAMQELMEQKASSMLVIDIGLPRNVEHDCSYIPNFHLYDIDDLAGVVTANSIERQQIVLELEDTIESEVRNFFEWEKQLGVVPVIRALREKALDMQEVTMTSLENKLPGLTEREYIQIGKHMKSIINQMLKQPISELKEMSVEEDATTSIEHFKRIFGLTKTDVTIIEKEQAETRS.

Substrate-binding positions include 49–52 (TCNR), Ser-109, 114–116 (ETQ), and Gln-120. The active-site Nucleophile is Cys-50. Residue 189-194 (GAGEMS) participates in NADP(+) binding.

Belongs to the glutamyl-tRNA reductase family. Homodimer.

The catalysed reaction is (S)-4-amino-5-oxopentanoate + tRNA(Glu) + NADP(+) = L-glutamyl-tRNA(Glu) + NADPH + H(+). It participates in porphyrin-containing compound metabolism; protoporphyrin-IX biosynthesis; 5-aminolevulinate from L-glutamyl-tRNA(Glu): step 1/2. In terms of biological role, catalyzes the NADPH-dependent reduction of glutamyl-tRNA(Glu) to glutamate 1-semialdehyde (GSA). In Listeria monocytogenes serotype 4a (strain HCC23), this protein is Glutamyl-tRNA reductase.